The following is a 155-amino-acid chain: Ribosomal RNA large subunit methyltransferase H (155 aa).

S-adenosyl-L-methionine is bound by residues Leu-72, Gly-103, and 122–127; that span reads LSALTL.

The protein belongs to the RNA methyltransferase RlmH family. In terms of assembly, homodimer.

It localises to the cytoplasm. It catalyses the reaction pseudouridine(1915) in 23S rRNA + S-adenosyl-L-methionine = N(3)-methylpseudouridine(1915) in 23S rRNA + S-adenosyl-L-homocysteine + H(+). Its function is as follows. Specifically methylates the pseudouridine at position 1915 (m3Psi1915) in 23S rRNA. This Shigella boydii serotype 18 (strain CDC 3083-94 / BS512) protein is Ribosomal RNA large subunit methyltransferase H.